Consider the following 863-residue polypeptide: DNA mismatch repair protein MutS (863 aa).

ATP is bound at residue 607–614 (GPNMAGKS).

Belongs to the DNA mismatch repair MutS family.

This protein is involved in the repair of mismatches in DNA. It is possible that it carries out the mismatch recognition step. This protein has a weak ATPase activity. This Caldicellulosiruptor bescii (strain ATCC BAA-1888 / DSM 6725 / KCTC 15123 / Z-1320) (Anaerocellum thermophilum) protein is DNA mismatch repair protein MutS.